The primary structure comprises 532 residues: Cytokinin dehydrogenase 1 (532 aa).

An N-terminal signal peptide occupies residues 1-17 (MAAIYLLIAALIASSHA). N-linked (GlcNAc...) asparagine glycosylation is found at N52 and N63. The FAD-binding PCMH-type domain maps to 65 to 244 (TAALPAAVLF…TRARVAVEPA (180 aa)). Residues F100, G102, R103, and G104 each coordinate FAD. At H105 the chain carries Pros-8alpha-FAD histidine. Residues S106 and Q110 each coordinate FAD. N-linked (GlcNAc...) asparagine glycosylation occurs at N133. 5 residues coordinate FAD: D168, T173, S179, V183, and I234. N-linked (GlcNAc...) asparagine glycosylation is found at N321 and N432. The FAD site is built by Y490, S525, and Q528.

Belongs to the oxygen-dependent FAD-linked oxidoreductase family. As to quaternary structure, monomer. It depends on FAD as a cofactor.

It is found in the secreted. It localises to the extracellular space. The catalysed reaction is N(6)-dimethylallyladenine + A + H2O = 3-methyl-2-butenal + adenine + AH2. Functionally, catalyzes the oxidation of cytokinins, a family of N(6)-substituted adenine derivatives that are plant hormones, where the substituent is an isopentenyl group. The chain is Cytokinin dehydrogenase 1 (CKX1) from Oryza sativa subsp. japonica (Rice).